The primary structure comprises 653 residues: Modification methylase StsI (653 aa).

Belongs to the N(4)/N(6)-methyltransferase family. Monomer.

The enzyme catalyses a 2'-deoxyadenosine in DNA + S-adenosyl-L-methionine = an N(6)-methyl-2'-deoxyadenosine in DNA + S-adenosyl-L-homocysteine + H(+). Functionally, an alpha subtype methylase that recognizes the double-stranded sequence 5'-GGATG-3' in one strand and 3'-CATCC-5' in the other, methylates A of both strands, and protects the DNA from cleavage by the StsI endonuclease. The 2 domains of the protein participate in modification of the two strands. The sequence is that of Modification methylase StsI (stsIM) from Streptococcus sanguinis.